The primary structure comprises 367 residues: Peptide chain release factor 2 (367 aa).

Gln250 is subject to N5-methylglutamine.

The protein belongs to the prokaryotic/mitochondrial release factor family. In terms of processing, methylated by PrmC. Methylation increases the termination efficiency of RF2.

It localises to the cytoplasm. Its function is as follows. Peptide chain release factor 2 directs the termination of translation in response to the peptide chain termination codons UGA and UAA. This chain is Peptide chain release factor 2, found in Mycobacteroides abscessus (strain ATCC 19977 / DSM 44196 / CCUG 20993 / CIP 104536 / JCM 13569 / NCTC 13031 / TMC 1543 / L948) (Mycobacterium abscessus).